A 262-amino-acid chain; its full sequence is Zinc finger protein 138 (262 aa).

Residues 110-132 form a C2H2-type 1 zinc finger; sequence FRCKECDKSLCMLSRLTQHKKIH. A C2H2-type 2; degenerate zinc finger spans residues 138-160; it reads YKCEECGKTFNWSTNLSKPKKIH. The C2H2-type 3; degenerate zinc finger occupies 166 to 188; sequence YKCEVCGKAFHQSSILTKHKIIR. The C2H2-type 4 zinc-finger motif lies at 194–216; the sequence is YKCAHCGKAFKQSSHLTRHKIIH. The C2H2-type 5; degenerate zinc finger occupies 222–244; it reads YKCEQCGKVFKQSPTLTKHQIIY. The segment at 250–262 adopts a C2H2-type 6; degenerate zinc-finger fold; it reads YKCEECGKAFNLS.

Belongs to the krueppel C2H2-type zinc-finger protein family.

It localises to the nucleus. Functionally, may be involved in transcriptional regulation as a repressor. The chain is Zinc finger protein 138 (ZNF138) from Homo sapiens (Human).